We begin with the raw amino-acid sequence, 166 residues long: Large ribosomal subunit protein uL10 (166 aa).

The protein belongs to the universal ribosomal protein uL10 family. Part of the ribosomal stalk of the 50S ribosomal subunit. The N-terminus interacts with L11 and the large rRNA to form the base of the stalk. The C-terminus forms an elongated spine to which L12 dimers bind in a sequential fashion forming a multimeric L10(L12)X complex.

In terms of biological role, forms part of the ribosomal stalk, playing a central role in the interaction of the ribosome with GTP-bound translation factors. This chain is Large ribosomal subunit protein uL10, found in Staphylococcus haemolyticus (strain JCSC1435).